The primary structure comprises 150 residues: Urease accessory protein UreE (150 aa).

It belongs to the UreE family.

The protein localises to the cytoplasm. Involved in urease metallocenter assembly. Binds nickel. Probably functions as a nickel donor during metallocenter assembly. The sequence is that of Urease accessory protein UreE from Parasynechococcus marenigrum (strain WH8102).